The chain runs to 185 residues: Ribosome-recycling factor (185 aa).

The protein belongs to the RRF family.

The protein resides in the cytoplasm. Functionally, responsible for the release of ribosomes from messenger RNA at the termination of protein biosynthesis. May increase the efficiency of translation by recycling ribosomes from one round of translation to another. This Francisella tularensis subsp. holarctica (strain FTNF002-00 / FTA) protein is Ribosome-recycling factor.